The following is a 258-amino-acid chain: C1q-related factor (258 aa).

Residues 1–16 (MLLVLVVLIPVLVSSG) form the signal peptide. The tract at residues 39 to 117 (GPGAGARTDG…PGLPGAGGSG (79 aa)) is disordered. Residues 67–77 (GPQGKPGRTGK) show a composition bias toward low complexity. Positions 67 to 115 (GPQGKPGRTGKPGPPGPPGDPGPPGPVGPPGEKGEPGKPGPPGLPGAGG) constitute a Collagen-like domain. Pro residues predominate over residues 78–95 (PGPPGPPGDPGPPGPVGP). One can recognise a C1q domain in the interval 125–258 (TTVPRVAFYA…TFSGFIIYSD (134 aa)).

As to quaternary structure, interacts with ADGRB3. Forms heterooligomers with C1QL4, when proteins are coexpressed; this interaction does not occur after secretion. As to expression, expressed in brainstem.

The protein localises to the secreted. Its function is as follows. May regulate the number of excitatory synapses that are formed on hippocampus neurons. Has no effect on inhibitory synapses. This is C1q-related factor (C1QL1) from Homo sapiens (Human).